The sequence spans 481 residues: GTPase Obg (481 aa).

The Obg domain occupies 2-159 (TTFVDRVVLH…IDVVLELKSV (158 aa)). Positions 160–330 (ADVGLVGYPS…LMYAMGELVT (171 aa)) constitute an OBG-type G domain. Residues 166–173 (GYPSAGKS), 191–195 (FTTLV), 212–215 (DVPG), 282–285 (NKVD), and 311–313 (SAA) each bind GTP. S173 and T193 together coordinate Mg(2+). The OCT domain occupies 348-426 (PKAVDDAGFT…IGEREFDWQP (79 aa)). Residues 439 to 452 (GDQRLAEKSERPSA) are compositionally biased toward basic and acidic residues. Positions 439-481 (GDQRLAEKSERPSATERLAARKARRQRPEDEAEADEPVGDGEE) are disordered. The segment covering 468-481 (DEAEADEPVGDGEE) has biased composition (acidic residues).

It belongs to the TRAFAC class OBG-HflX-like GTPase superfamily. OBG GTPase family. In terms of assembly, monomer. Mg(2+) is required as a cofactor.

Its subcellular location is the cytoplasm. Functionally, an essential GTPase which binds GTP, GDP and possibly (p)ppGpp with moderate affinity, with high nucleotide exchange rates and a fairly low GTP hydrolysis rate. Plays a role in control of the cell cycle, stress response, ribosome biogenesis and in those bacteria that undergo differentiation, in morphogenesis control. The protein is GTPase Obg of Salinispora tropica (strain ATCC BAA-916 / DSM 44818 / JCM 13857 / NBRC 105044 / CNB-440).